Consider the following 102-residue polypeptide: NADH-quinone oxidoreductase subunit K (102 aa).

Helical transmembrane passes span 6-26 (LTGF…GVLA), 30-50 (ILFQ…AFIA), and 63-83 (MFVL…ALFL).

This sequence belongs to the complex I subunit 4L family. In terms of assembly, NDH-1 is composed of 14 different subunits. Subunits NuoA, H, J, K, L, M, N constitute the membrane sector of the complex.

It is found in the cell inner membrane. The enzyme catalyses a quinone + NADH + 5 H(+)(in) = a quinol + NAD(+) + 4 H(+)(out). Functionally, NDH-1 shuttles electrons from NADH, via FMN and iron-sulfur (Fe-S) centers, to quinones in the respiratory chain. The immediate electron acceptor for the enzyme in this species is believed to be ubiquinone. Couples the redox reaction to proton translocation (for every two electrons transferred, four hydrogen ions are translocated across the cytoplasmic membrane), and thus conserves the redox energy in a proton gradient. This chain is NADH-quinone oxidoreductase subunit K, found in Rhodopseudomonas palustris (strain BisA53).